The following is a 326-amino-acid chain: MSAVAPDGRKMLRLEVRNSQTPIERKPEWIKTRAKMGPEYKQLQQLVKGEGLHTVCQEAGCPNIFECWEDREATFLIGGDQCTRRCDFCQIDTGKPQALDRDEPRRVGESVVTMDLNYATITGVARDDLEDGGAWLYAETVRQIHTLTAEREAGATKVELLIPDFNAEPEQLAEVFSSRPEVLAHNVETVPRIFKRIRPGFRYERSLEVITRAREAGLITKSNLILGMGETREEVSEALQDLYDAGCELITITQYLRPSVRHHPVERWVKPHEFVELKDEADAIGYSGVMSGPLVRSSYRAGRLFQQAMEARGVAAAGSAQAAQAV.

7 residues coordinate [4Fe-4S] cluster: Cys-56, Cys-61, Cys-67, Cys-82, Cys-86, Cys-89, and Ser-298. One can recognise a Radical SAM core domain in the interval 68 to 287 (WEDREATFLI…KDEADAIGYS (220 aa)).

Belongs to the radical SAM superfamily. Lipoyl synthase family. The cofactor is [4Fe-4S] cluster.

Its subcellular location is the cytoplasm. It catalyses the reaction [[Fe-S] cluster scaffold protein carrying a second [4Fe-4S](2+) cluster] + N(6)-octanoyl-L-lysyl-[protein] + 2 oxidized [2Fe-2S]-[ferredoxin] + 2 S-adenosyl-L-methionine + 4 H(+) = [[Fe-S] cluster scaffold protein] + N(6)-[(R)-dihydrolipoyl]-L-lysyl-[protein] + 4 Fe(3+) + 2 hydrogen sulfide + 2 5'-deoxyadenosine + 2 L-methionine + 2 reduced [2Fe-2S]-[ferredoxin]. It functions in the pathway protein modification; protein lipoylation via endogenous pathway; protein N(6)-(lipoyl)lysine from octanoyl-[acyl-carrier-protein]: step 2/2. Functionally, catalyzes the radical-mediated insertion of two sulfur atoms into the C-6 and C-8 positions of the octanoyl moiety bound to the lipoyl domains of lipoate-dependent enzymes, thereby converting the octanoylated domains into lipoylated derivatives. The chain is Lipoyl synthase from Streptomyces griseus subsp. griseus (strain JCM 4626 / CBS 651.72 / NBRC 13350 / KCC S-0626 / ISP 5235).